The sequence spans 777 residues: Ethylene receptor 4 (777 aa).

Helical transmembrane passes span 49 to 69 (LLIAASFLSIPLELFYFATCA), 77 to 97 (AVLHFCAFIVLCGATHLLAAF), and 113 to 133 (AAKVLAAVASSAAAVSLLTFI). Cu cation contacts are provided by Cys-88 and His-92. The region spanning 184 to 344 (DAHAILRTTA…VVADQAAVAL (161 aa)) is the GAF domain. Positions 387 to 521 (AMCHAMRRPV…NTGSGACRLS (135 aa)) constitute a Histidine kinase domain. Position 390 is a phosphohistidine; by autocatalysis (His-390). The Response regulatory domain occupies 645 to 774 (RVLLADDDAM…ALGAQLCRVL (130 aa)). At Asp-696 the chain carries 4-aspartylphosphate.

The protein belongs to the ethylene receptor family. Cu cation is required as a cofactor.

It localises to the endoplasmic reticulum membrane. The enzyme catalyses ATP + protein L-histidine = ADP + protein N-phospho-L-histidine.. Functionally, ethylene receptor related to bacterial two-component regulators. Acts as a redundant negative regulator of ethylene signaling. This Oryza sativa subsp. japonica (Rice) protein is Ethylene receptor 4 (ETR4).